The primary structure comprises 257 residues: Phycoerythrobilin:ferredoxin oxidoreductase (257 aa).

It belongs to the HY2 family.

The catalysed reaction is (3Z)-phycoerythrobilin + oxidized 2[4Fe-4S]-[ferredoxin] = 15,16-dihydrobiliverdin + reduced 2[4Fe-4S]-[ferredoxin] + 2 H(+). Catalyzes the two-electron reduction of the C2 and C3(1) diene system of 15,16-dihydrobiliverdin. The protein is Phycoerythrobilin:ferredoxin oxidoreductase (pebB) of Prochlorococcus marinus subsp. pastoris (strain CCMP1986 / NIES-2087 / MED4).